The following is a 125-amino-acid chain: Ribosome-binding factor A (125 aa).

The protein belongs to the RbfA family. As to quaternary structure, monomer. Binds 30S ribosomal subunits, but not 50S ribosomal subunits or 70S ribosomes.

It localises to the cytoplasm. Its function is as follows. One of several proteins that assist in the late maturation steps of the functional core of the 30S ribosomal subunit. Associates with free 30S ribosomal subunits (but not with 30S subunits that are part of 70S ribosomes or polysomes). Required for efficient processing of 16S rRNA. May interact with the 5'-terminal helix region of 16S rRNA. The sequence is that of Ribosome-binding factor A from Methylobacillus flagellatus (strain ATCC 51484 / DSM 6875 / VKM B-1610 / KT).